We begin with the raw amino-acid sequence, 671 residues long: Acetyl-coenzyme A synthetase 2 (671 aa).

CoA-binding positions include 207–210 and Thr-326; that span reads RGGR. Residues 402–404, 426–431, Asp-517, and Arg-532 contribute to the ATP site; these read GEP and DTYWQT. Ser-540 lines the CoA pocket. Arg-543 provides a ligand contact to ATP. CoA is bound at residue Arg-603.

The protein belongs to the ATP-dependent AMP-binding enzyme family.

It carries out the reaction acetate + ATP + CoA = acetyl-CoA + AMP + diphosphate. The sequence is that of Acetyl-coenzyme A synthetase 2 (ACS2) from Candida albicans (strain SC5314 / ATCC MYA-2876) (Yeast).